The chain runs to 250 residues: Flavin-dependent thymidylate synthase (250 aa).

The region spanning 7-233 is the ThyX domain; sequence LRVQLIAKTE…PQVFSDFEIT (227 aa). FAD-binding positions include Ser-71, 95 to 97, and Gln-103; that span reads RHR. DUMP is bound by residues 92–95, 103–107, and Arg-172; these read ELIR and QLSQR. The ThyX motif motif lies at 95–105; that stretch reads RHRHFSYSQLS. Residues 188–190 and His-194 contribute to the FAD site; that span reads NYR. A dUMP-binding site is contributed by Arg-199. Arg-199 serves as the catalytic Involved in ionization of N3 of dUMP, leading to its activation.

This sequence belongs to the thymidylate synthase ThyX family. As to quaternary structure, homotetramer. It depends on FAD as a cofactor.

The enzyme catalyses dUMP + (6R)-5,10-methylene-5,6,7,8-tetrahydrofolate + NADPH + H(+) = dTMP + (6S)-5,6,7,8-tetrahydrofolate + NADP(+). The protein operates within pyrimidine metabolism; dTTP biosynthesis. Its function is as follows. Catalyzes the reductive methylation of 2'-deoxyuridine-5'-monophosphate (dUMP) to 2'-deoxythymidine-5'-monophosphate (dTMP) while utilizing 5,10-methylenetetrahydrofolate (mTHF) as the methyl donor, and NADPH and FADH(2) as the reductant. The protein is Flavin-dependent thymidylate synthase of Mycolicibacterium gilvum (strain PYR-GCK) (Mycobacterium gilvum (strain PYR-GCK)).